Consider the following 44-residue polypeptide: Cytochrome b559 subunit beta (44 aa).

Residues 19–35 (WIAVHTLAVPSVFFLGA) form a helical membrane-spanning segment. Histidine 23 is a binding site for heme.

Belongs to the PsbE/PsbF family. Heterodimer of an alpha subunit and a beta subunit. PSII is composed of 1 copy each of membrane proteins PsbA, PsbB, PsbC, PsbD, PsbE, PsbF, PsbH, PsbI, PsbJ, PsbK, PsbL, PsbM, PsbT, PsbX, PsbY, PsbZ, Psb30/Ycf12, peripheral proteins PsbO, CyanoQ (PsbQ), PsbU, PsbV and a large number of cofactors. It forms dimeric complexes. Requires heme b as cofactor.

It is found in the cellular thylakoid membrane. Its function is as follows. This b-type cytochrome is tightly associated with the reaction center of photosystem II (PSII). PSII is a light-driven water:plastoquinone oxidoreductase that uses light energy to abstract electrons from H(2)O, generating O(2) and a proton gradient subsequently used for ATP formation. It consists of a core antenna complex that captures photons, and an electron transfer chain that converts photonic excitation into a charge separation. This Cyanothece sp. (strain PCC 7425 / ATCC 29141) protein is Cytochrome b559 subunit beta.